Here is a 478-residue protein sequence, read N- to C-terminus: Argininosuccinate lyase (478 aa).

The protein belongs to the lyase 1 family. Argininosuccinate lyase subfamily.

It is found in the cytoplasm. The enzyme catalyses 2-(N(omega)-L-arginino)succinate = fumarate + L-arginine. It participates in amino-acid biosynthesis; L-arginine biosynthesis; L-arginine from L-ornithine and carbamoyl phosphate: step 3/3. The protein is Argininosuccinate lyase of Leptospira biflexa serovar Patoc (strain Patoc 1 / Ames).